The chain runs to 337 residues: Trace amine-associated receptor 5 (337 aa).

Topologically, residues 1-38 (MRAVLLPGSGEQPAAFCYQVNGSCPRTVHPLAIRVLIY) are extracellular. The N-linked (GlcNAc...) asparagine glycan is linked to N21. 2 disulfides stabilise this stretch: C24–C188 and C99–C192. A helical transmembrane segment spans residues 39–59 (LACAVGMLITVLGNLFVVFAV). Residues 60–70 (SYFKVLHTPTN) lie on the Cytoplasmic side of the membrane. Residues 71–91 (FLLLSLALADMLLGLLVLPLS) traverse the membrane as a helical segment. The Extracellular segment spans residues 92 to 109 (TVRSVESCWFFGDFLCRL). A helical membrane pass occupies residues 110 to 130 (HTYLDTLFCLTSIFHLCFISI). The Cytoplasmic portion of the chain corresponds to 131–154 (DRHCAICDPLLYPSKFTVRIALRY). The chain crosses the membrane as a helical span at residues 155-175 (IAAGWGIPAAYTAFFLYTDVV). The interval 176 to 189 (ERALSQWLEEMPCV) is extracellular Loop 2 (ECL2). Residues 176–204 (ERALSQWLEEMPCVGSCQLLFNKFWGWLN) are Extracellular-facing. A helical membrane pass occupies residues 205 to 225 (FPAFFIPCLIMISLYLKIFVV). At 226–253 (ATRQAQQIRTLSQSLSGAVKRERKAAKT) the chain is on the cytoplasmic side. The helical transmembrane segment at 254-274 (LGIAVGIYLVCWLPFTVDTLV) threads the bilayer. Topologically, residues 275–284 (DSLLNFVTPP) are extracellular. The helical transmembrane segment at 285–307 (LVFDIFIWFAYFNSACNPIIYVF) threads the bilayer. Over 308–337 (SYRWFRKALKLLLSREILSPRTQTADLFHD) the chain is Cytoplasmic.

The protein belongs to the G-protein coupled receptor 1 family.

It localises to the cell membrane. Its function is as follows. Olfactory receptor specific for trimethylamine, a trace amine enriched in the urine of male rats, playing a role in social behavior. Also activated by N-methylpiperidine. Trimethylamine is present at high concentration in the urine of male after puberty and acts as an attractant. Trimethylamine-binding causes a conformation change that triggers signaling via G(s)-class of G alpha proteins (GNAL or GNAS). Also required to provide olfactory input into limbic brain areas to regulate emotional behaviors likely via modulation of the serotonin system. The sequence is that of Trace amine-associated receptor 5 from Rattus norvegicus (Rat).